A 142-amino-acid chain; its full sequence is Large ribosomal subunit protein uL13 (142 aa).

Belongs to the universal ribosomal protein uL13 family. In terms of assembly, part of the 50S ribosomal subunit.

In terms of biological role, this protein is one of the early assembly proteins of the 50S ribosomal subunit, although it is not seen to bind rRNA by itself. It is important during the early stages of 50S assembly. In Haemophilus influenzae (strain 86-028NP), this protein is Large ribosomal subunit protein uL13.